We begin with the raw amino-acid sequence, 317 residues long: Melanocyte-stimulating hormone receptor (317 aa).

The Extracellular portion of the chain corresponds to 1 to 37 (MAVQGFQRRLLGSLNSTPTAIPQLGLAANQTGARCLE). N-linked (GlcNAc...) asparagine glycosylation occurs at Asn-29. A helical membrane pass occupies residues 38-63 (VSIPDGLFLSLGLVSLVENVLVVATI). The Cytoplasmic segment spans residues 64–72 (AKNRNLHSP). A helical membrane pass occupies residues 73–93 (TYCFICCLALSDLLVSGGNVL). Residues 94–118 (ETVVILLLEASALAARAAVVQPLDN) lie on the Extracellular side of the membrane. Residues 119–140 (VIDVITCSSMVSSLCFLGAIAM) traverse the membrane as a helical segment. Residues 141–163 (DRYVSIFYALRYHSIVTLPRARQ) are Cytoplasmic-facing. The helical transmembrane segment at 164–183 (AIAAIWVASVLFSTLFIAYY) threads the bilayer. Over 184 to 191 (DHAAVLLC) the chain is Extracellular. A helical transmembrane segment spans residues 192-211 (LVVFFLAMLVLMAVLYVHML). Over 212 to 240 (ARACQHAQGIARLHKRQRPLHQGFGLKGA) the chain is Cytoplasmic. A helical membrane pass occupies residues 241 to 266 (VTLTILLGIFFLCWGPFFLHLTLIVL). Topologically, residues 267–279 (CPQHPTCSCIFKN) are extracellular. The chain crosses the membrane as a helical span at residues 280–300 (FNLFLTLIICNAIIDPLIYAF). Over 301–317 (RRQELRRTLKEGLTCSW) the chain is Cytoplasmic. Cys-315 carries S-palmitoyl cysteine lipidation.

The protein belongs to the G-protein coupled receptor 1 family. In terms of assembly, interacts with MGRN1, but does not undergo MGRN1-mediated ubiquitination; this interaction competes with GNAS-binding and thus inhibits agonist-induced cAMP production. Interacts with OPN3; the interaction results in a decrease in MC1R-mediated cAMP signaling and ultimately a decrease in melanin production in melanocytes.

It is found in the cell membrane. In terms of biological role, receptor for MSH (alpha, beta and gamma) and ACTH. The activity of this receptor is mediated by G proteins which activate adenylate cyclase. Mediates melanogenesis, the production of eumelanin (black/brown) and phaeomelanin (red/yellow), via regulation of cAMP signaling in melanocytes. This is Melanocyte-stimulating hormone receptor (MC1R) from Hylobates lar (Lar gibbon).